Reading from the N-terminus, the 495-residue chain is Genome polyprotein (495 aa).

Over M1 to G445 the chain is Extracellular. 4 cysteine pairs are disulfide-bonded: C3–C30, C60–C121, C74–C105, and C92–C116. A glycan (N-linked (GlcNAc...) asparagine; by host) is linked at N67. The segment at D98–G111 is fusion peptide. N-linked (GlcNAc...) asparagine; by host glycosylation is present at N153. 2 disulfides stabilise this stretch: C185/C285 and C302/C333. Residues A446–I466 form a helical membrane-spanning segment. The Cytoplasmic segment spans residues G467–S472. A helical transmembrane segment spans residues T473–V493. Topologically, residues H494–A495 are extracellular.

In terms of assembly, homodimer; in the endoplasmic reticulum and Golgi. Interacts with protein prM. Interacts with non-structural protein 1. Post-translationally, N-glycosylated. Specific enzymatic cleavages in vivo yield mature proteins. Cleavages in the lumen of endoplasmic reticulum are performed by host signal peptidase, wereas cleavages in the cytoplasmic side are performed by serine protease NS3. Signal cleavage at the 2K-4B site requires a prior NS3 protease-mediated cleavage at the 4A-2K site.

It is found in the virion membrane. It localises to the host endoplasmic reticulum membrane. Functionally, binds to host cell surface receptor and mediates fusion between viral and cellular membranes. Envelope protein is synthesized in the endoplasmic reticulum in the form of heterodimer with protein prM. They play a role in virion budding in the ER, and the newly formed immature particle is covered with 60 spikes composed of heterodimer between precursor prM and envelope protein E. The virion is transported to the Golgi apparatus where the low pH causes dissociation of PrM-E heterodimers and formation of E homodimers. prM-E cleavage is inefficient, and many virions are only partially matured. These uncleaved prM would play a role in immune evasion. In Aedes aegypti (Yellowfever mosquito), this protein is Genome polyprotein.